A 632-amino-acid polypeptide reads, in one-letter code: DNA mismatch repair protein MutL (632 aa).

Residues 376–397 are disordered; that stretch reads EQPQAEPRQSFTPGSGAGSGYQ.

This sequence belongs to the DNA mismatch repair MutL/HexB family.

In terms of biological role, this protein is involved in the repair of mismatches in DNA. It is required for dam-dependent methyl-directed DNA mismatch repair. May act as a 'molecular matchmaker', a protein that promotes the formation of a stable complex between two or more DNA-binding proteins in an ATP-dependent manner without itself being part of a final effector complex. This Pseudomonas entomophila (strain L48) protein is DNA mismatch repair protein MutL.